The sequence spans 1004 residues: Hyaluronate lyase HylB (1004 aa).

The N-terminal stretch at 1–29 (MKNRKIWVMLVGLFTALTNGFMGTTLTFA) is a signal peptide. Residues histidine 468, tyrosine 477, and arginine 531 contribute to the active site.

The protein belongs to the polysaccharide lyase 8 family.

The protein resides in the secreted. It carries out the reaction [hyaluronan](n) = n 3-(4-deoxy-beta-D-gluc-4-enuronosyl)-N-acetyl-D-glucosamine + H2O. The catalysed reaction is Eliminative degradation of polysaccharides containing 1,4-beta-D-hexosaminyl and 1,3-beta-D-glucuronosyl linkages to disaccharides containing 4-deoxy-beta-D-gluc-4-enuronosyl groups.. In terms of biological role, degrades hyaluronic acid (HA) and chondroitin sulfate (CS) A in vitro. Is not active against heparin sodium salt (HS). Involved in the pathogenesis of vancomycin-resistant E.faecalis infections. Contributes to attenuation of the lipopolysaccharide (LPS)-mediated nuclear factor (NF)-kappa-B activation assayed in the mouse RAW-Blue reporter macrophages. The protein is Hyaluronate lyase HylB of Enterococcus faecalis (strain ATCC 700802 / V583).